Reading from the N-terminus, the 414-residue chain is Glucose-1-phosphate adenylyltransferase (414 aa).

Residues Gly164, 181–182 (EK), and Ser199 contribute to the alpha-D-glucose 1-phosphate site.

The protein belongs to the bacterial/plant glucose-1-phosphate adenylyltransferase family. In terms of assembly, homotetramer.

It carries out the reaction alpha-D-glucose 1-phosphate + ATP + H(+) = ADP-alpha-D-glucose + diphosphate. It participates in glycan biosynthesis; glycogen biosynthesis. Involved in the biosynthesis of ADP-glucose, a building block required for the elongation reactions to produce glycogen. Catalyzes the reaction between ATP and alpha-D-glucose 1-phosphate (G1P) to produce pyrophosphate and ADP-Glc. In Kocuria rhizophila (strain ATCC 9341 / DSM 348 / NBRC 103217 / DC2201), this protein is Glucose-1-phosphate adenylyltransferase.